Reading from the N-terminus, the 879-residue chain is Beta-alanyl-bioamine nonribosomal peptide synthetase ebony (879 aa).

Positions 26–540 are adenylation; that stretch reads FEEQQLRHAD…EHVPLLVNGK (515 aa). In terms of domain architecture, Carrier spans 573 to 650; the sequence is EDLKLTARDL…EIIEKMAANH (78 aa). Serine 611 is modified (O-(pantetheine 4'-phosphoryl)serine). A condensation region spans residues 666–679; that stretch reads LKMEAVPLRLEHRQ. Glutamate 696 is a binding site for dopamine. Glutamate 696 contributes to the histamine binding site. Beta-alanine contacts are provided by threonine 825 and asparagine 827.

This sequence belongs to the NRP synthetase family. Requires pantetheine 4'-phosphate as cofactor. Mg(2+) is required as a cofactor. In terms of tissue distribution, expressed in the optic neuropils in the lamina and in distinct cells at the distal border of the medulla cortex (at protein level). Expressed in the protocerebrum and thoracic ganglia (at protein level). Expressed in antennal lobes, antennal nerves and subesophagic ganglion (at protein level). Specifically, expressed in epithelial glial cells of the medulla that surround the synaptic cleft of photoreceptor axonal endings (at protein level). Expressed in some cells in the cuticle.

It localises to the cytoplasm. The catalysed reaction is histamine + beta-alanine + ATP = carcinine + AMP + diphosphate + H(+). The enzyme catalyses beta-alanine + ATP + H(+) = beta-alanyl-5'-AMP + diphosphate. It carries out the reaction beta-alanyl-5'-AMP + holo-[peptidyl-carrier protein] = beta-alanyl-[peptidyl-carrier protein] + AMP + H(+). It catalyses the reaction beta-alanyl-[peptidyl-carrier protein] + histamine = carcinine + holo-[peptidyl-carrier protein] + H(+). The catalysed reaction is dopamine + beta-alanine + ATP = beta-alanyl-dopamine + AMP + diphosphate + H(+). The enzyme catalyses beta-alanyl-[peptidyl-carrier protein] + dopamine = beta-alanyl-dopamine + holo-[peptidyl-carrier protein] + H(+). Functionally, nonribosomal peptide synthase which is required for the regulation of histamine and dopamine levels in various tissues through their condensation with beta-alanine. In epithelial glial cells, plays an essential role in the inactivation of histamine, the main neurotransmitter in the optical nerve system, by catalyzing the conversion of histamine into carcinine. In the cuticle, catalyzes the condensation of beta-alanine with dopamine to form beta-alanyl-dopamine (NBAD), a metabolite involved in the pigmentation and sclerotization of the insect cuticle. Also, regulates the cuticular hydrocarbon composition in females. Acts downstream of the body clock to regulate circadian behavioral rhythms. Can also condense beta-alanine with biogenic amines tyramine, octopamine, and serotonin in vitro. The protein is Beta-alanyl-bioamine nonribosomal peptide synthetase ebony of Drosophila melanogaster (Fruit fly).